A 291-amino-acid chain; its full sequence is 4-diphosphocytidyl-2-C-methyl-D-erythritol kinase (291 aa).

Residue Lys-8 is part of the active site. 89-99 (PIGSGIGGGSS) contributes to the ATP binding site. Asp-131 is an active-site residue.

The protein belongs to the GHMP kinase family. IspE subfamily.

It catalyses the reaction 4-CDP-2-C-methyl-D-erythritol + ATP = 4-CDP-2-C-methyl-D-erythritol 2-phosphate + ADP + H(+). Its pathway is isoprenoid biosynthesis; isopentenyl diphosphate biosynthesis via DXP pathway; isopentenyl diphosphate from 1-deoxy-D-xylulose 5-phosphate: step 3/6. Functionally, catalyzes the phosphorylation of the position 2 hydroxy group of 4-diphosphocytidyl-2C-methyl-D-erythritol. The sequence is that of 4-diphosphocytidyl-2-C-methyl-D-erythritol kinase from Chlamydia abortus (strain DSM 27085 / S26/3) (Chlamydophila abortus).